Consider the following 224-residue polypeptide: 7-cyano-7-deazaguanine synthase (224 aa).

9-19 is an ATP binding site; sequence LSGGLDSATVL. Positions 189, 199, 202, and 205 each coordinate Zn(2+).

Belongs to the QueC family. Zn(2+) is required as a cofactor.

It catalyses the reaction 7-carboxy-7-deazaguanine + NH4(+) + ATP = 7-cyano-7-deazaguanine + ADP + phosphate + H2O + H(+). It participates in purine metabolism; 7-cyano-7-deazaguanine biosynthesis. Functionally, catalyzes the ATP-dependent conversion of 7-carboxy-7-deazaguanine (CDG) to 7-cyano-7-deazaguanine (preQ(0)). The chain is 7-cyano-7-deazaguanine synthase from Ralstonia pickettii (strain 12J).